A 208-amino-acid polypeptide reads, in one-letter code: MLSSKRRLMRLLPLASLLLTACGLHTQPQNPGQSPTSLQWHQHQQAVEKITHYQTRGAFAWLSERQKVYARFNWQQSAPDRYRLLLTNPLGSTELQLDQQGQVAQIVDNKGKRYVSNDAAQMISQLTGMTIPLSNLRQWMMGLPGEATDYQLDDQYRLREVNFSEEGKRWHVTYLDYHTEQNPQLPANIELQQGDQRIKLKMDSWTIK.

Residues 1–21 (MLSSKRRLMRLLPLASLLLTA) form the signal peptide. Residue C22 is the site of N-palmitoyl cysteine attachment. The S-diacylglycerol cysteine moiety is linked to residue C22.

This sequence belongs to the LolB family. In terms of assembly, monomer.

The protein resides in the cell outer membrane. Functionally, plays a critical role in the incorporation of lipoproteins in the outer membrane after they are released by the LolA protein. In Erwinia tasmaniensis (strain DSM 17950 / CFBP 7177 / CIP 109463 / NCPPB 4357 / Et1/99), this protein is Outer-membrane lipoprotein LolB.